Here is a 249-residue protein sequence, read N- to C-terminus: Segregation and condensation protein A (249 aa).

This sequence belongs to the ScpA family. As to quaternary structure, component of a cohesin-like complex composed of ScpA, ScpB and the Smc homodimer, in which ScpA and ScpB bind to the head domain of Smc. The presence of the three proteins is required for the association of the complex with DNA.

The protein localises to the cytoplasm. Participates in chromosomal partition during cell division. May act via the formation of a condensin-like complex containing Smc and ScpB that pull DNA away from mid-cell into both cell halves. The polypeptide is Segregation and condensation protein A (Listeria welshimeri serovar 6b (strain ATCC 35897 / DSM 20650 / CCUG 15529 / CIP 8149 / NCTC 11857 / SLCC 5334 / V8)).